A 410-amino-acid chain; its full sequence is WD repeat and FYVE domain-containing protein 1 (410 aa).

WD repeat units lie at residues glycine 22–proline 61, threonine 66–asparagine 105, alanine 112–glycine 150, phenylalanine 153–isoleucine 192, glycine 197–leucine 236, and glycine 240–proline 279. The FYVE-type zinc finger occupies tryptophan 281–lysine 352. Residues cysteine 287, cysteine 290, cysteine 314, cysteine 317, cysteine 322, cysteine 325, cysteine 344, and cysteine 347 each contribute to the Zn(2+) site. The stretch at glutamate 364–leucine 403 is one WD 7 repeat. Phosphoserine is present on serine 408.

As to quaternary structure, binds PtdIns3P in vitro with high specificity over other phosphoinositides. Interacts (via WD repeat 2) with tyrosine-phosphorylated TLR3 (via TIR domain) in response to poly(I:C). Interacts with TLR4 in response to LPS. Interacts with TICAM1 in response to poly(I:C).

It localises to the early endosome. In terms of biological role, positively regulates TLR3- and TLR4-mediated signaling pathways by bridging the interaction between TLR3 or TLR4 and TICAM1. Promotes TLR3/4 ligand-induced activation of transcription factors IRF3 and NF-kappa-B, as well as the production of IFN-beta and inflammatory cytokines. This Bos taurus (Bovine) protein is WD repeat and FYVE domain-containing protein 1 (WDFY1).